We begin with the raw amino-acid sequence, 220 residues long: Redox-sensing transcriptional repressor Rex (220 aa).

Positions 17–56 form a DNA-binding region, H-T-H motif; the sequence is LYARSLRYLLQEGVESVSSQELGDRINVTAAQIRKDLSYF. 91–96 is a binding site for NAD(+); it reads GIGHLG.

It belongs to the transcriptional regulatory Rex family. In terms of assembly, homodimer.

The protein localises to the cytoplasm. Functionally, modulates transcription in response to changes in cellular NADH/NAD(+) redox state. This chain is Redox-sensing transcriptional repressor Rex, found in Roseiflexus sp. (strain RS-1).